The chain runs to 582 residues: DNA polymerase IV (582 aa).

The segment at 127 to 161 is disordered; the sequence is NADDGQSSTDKESEISTDVESERNDDSNNKDMIQA. Positions 135 to 155 are enriched in basic and acidic residues; it reads TDKESEISTDVESERNDDSNN. Positions 360–369 are involved in ssDNA binding; that stretch reads RGYSKCGDID. Residues Asp-367, Asp-369, and Asp-502 each coordinate Mg(2+).

The protein belongs to the DNA polymerase type-X family. As to quaternary structure, interacts with DNL4 subunit of the DNL4-LIF1 complex. Mg(2+) serves as cofactor.

It localises to the nucleus. The enzyme catalyses DNA(n) + a 2'-deoxyribonucleoside 5'-triphosphate = DNA(n+1) + diphosphate. Stimulated by the interaction with the DNL4-LIF1 complex. Its function is as follows. Repair polymerase. Involved in gap-filling in DNA nonhomologous end joining (NHEJ) required for double-strand break repair. Seems to conduct DNA synthesis in a stepwise distributive fashion rather than in a processive fashion as for other DNA polymerases. Preferentially acts upon short gaps formed by the alignment of linear duplexes with complementary single-strand ends. Required for filling gaps that need removal of a 5'- or 3'-terminal mismatch, however lacks nuclease activities. This is DNA polymerase IV (POL4) from Saccharomyces cerevisiae (strain ATCC 204508 / S288c) (Baker's yeast).